A 131-amino-acid polypeptide reads, in one-letter code: Ribosome-binding factor A (131 aa).

Belongs to the RbfA family. In terms of assembly, monomer. Binds 30S ribosomal subunits, but not 50S ribosomal subunits or 70S ribosomes.

The protein resides in the cytoplasm. One of several proteins that assist in the late maturation steps of the functional core of the 30S ribosomal subunit. Associates with free 30S ribosomal subunits (but not with 30S subunits that are part of 70S ribosomes or polysomes). Required for efficient processing of 16S rRNA. May interact with the 5'-terminal helix region of 16S rRNA. In Ruegeria sp. (strain TM1040) (Silicibacter sp.), this protein is Ribosome-binding factor A.